Here is a 419-residue protein sequence, read N- to C-terminus: Serine hydroxymethyltransferase (419 aa).

Residues Leu-121 and 125–127 (GHL) contribute to the (6S)-5,6,7,8-tetrahydrofolate site. At Lys-230 the chain carries N6-(pyridoxal phosphate)lysine. 355–357 (SPF) contributes to the (6S)-5,6,7,8-tetrahydrofolate binding site.

The protein belongs to the SHMT family. Homodimer. Requires pyridoxal 5'-phosphate as cofactor.

The protein resides in the cytoplasm. The enzyme catalyses (6R)-5,10-methylene-5,6,7,8-tetrahydrofolate + glycine + H2O = (6S)-5,6,7,8-tetrahydrofolate + L-serine. It participates in one-carbon metabolism; tetrahydrofolate interconversion. Its pathway is amino-acid biosynthesis; glycine biosynthesis; glycine from L-serine: step 1/1. Catalyzes the reversible interconversion of serine and glycine with tetrahydrofolate (THF) serving as the one-carbon carrier. This reaction serves as the major source of one-carbon groups required for the biosynthesis of purines, thymidylate, methionine, and other important biomolecules. Also exhibits THF-independent aldolase activity toward beta-hydroxyamino acids, producing glycine and aldehydes, via a retro-aldol mechanism. This chain is Serine hydroxymethyltransferase, found in Streptococcus equi subsp. zooepidemicus (strain MGCS10565).